Reading from the N-terminus, the 156-residue chain is Lipoprotein signal peptidase (156 aa).

Helical transmembrane passes span 5–25, 64–84, and 89–109; these read FKFIFYFWGAFVLVFVLDQWV, YLHLALIVVLFIYLFWQKTLL, and IAFGMMLGAGVSNLLDRFIHG. Catalysis depends on residues Asp113 and Asp130. The helical transmembrane segment at 122–142 threads the bilayer; sequence NFAIFNVADVMINISVALILI.

It belongs to the peptidase A8 family.

It is found in the cell inner membrane. The enzyme catalyses Release of signal peptides from bacterial membrane prolipoproteins. Hydrolyzes -Xaa-Yaa-Zaa-|-(S,diacylglyceryl)Cys-, in which Xaa is hydrophobic (preferably Leu), and Yaa (Ala or Ser) and Zaa (Gly or Ala) have small, neutral side chains.. It functions in the pathway protein modification; lipoprotein biosynthesis (signal peptide cleavage). In terms of biological role, this protein specifically catalyzes the removal of signal peptides from prolipoproteins. The sequence is that of Lipoprotein signal peptidase from Campylobacter jejuni subsp. jejuni serotype O:6 (strain 81116 / NCTC 11828).